The following is a 3434-amino-acid chain: Genome polyprotein (3434 aa).

The interaction with host EXOC1 stretch occupies residues serine 2–asparagine 15. Residues serine 2–threonine 110 are Cytoplasmic-facing. The interval leucine 37 to valine 72 is hydrophobic; homodimerization of capsid protein C. A propeptide spans glycine 106–alanine 125 (ER anchor for the capsid protein C, removed in mature form by serine protease NS3). Residues serine 111 to phenylalanine 131 form a helical membrane-spanning segment. The Extracellular portion of the chain corresponds to glutamine 132–asparagine 251. Asparagine 140 carries an N-linked (GlcNAc...) asparagine; by host glycan. The helical transmembrane segment at tryptophan 252 to serine 272 threads the bilayer. At asparagine 273 to lysine 277 the chain is on the cytoplasmic side. The helical transmembrane segment at valine 278–serine 292 threads the bilayer. At phenylalanine 293 to leucine 745 the chain is on the extracellular side. Disulfide bonds link cysteine 295-cysteine 322, cysteine 352-cysteine 408, cysteine 352-cysteine 413, cysteine 366-cysteine 397, cysteine 384-cysteine 408, and cysteine 384-cysteine 413. Positions aspartate 390–glycine 403 are fusion peptide. Asparagine 446 carries an N-linked (GlcNAc...) asparagine; by host glycan. 2 disulfide bridges follow: cysteine 482/cysteine 580 and cysteine 597/cysteine 628. Residues phenylalanine 746 to valine 766 traverse the membrane as a helical segment. At asparagine 767–serine 772 the chain is on the cytoplasmic side. A helical membrane pass occupies residues isoleucine 773–alanine 793. The Extracellular segment spans residues aspartate 794–aspartate 1218. 2 disulfides stabilise this stretch: cysteine 797/cysteine 808 and cysteine 848/cysteine 936. Asparagine 923 and asparagine 968 each carry an N-linked (GlcNAc...) asparagine; by host glycan. 4 disulfide bridges follow: cysteine 972–cysteine 1016, cysteine 1073–cysteine 1122, cysteine 1084–cysteine 1105, and cysteine 1106–cysteine 1109. Asparagine 1000 carries an N-linked (GlcNAc...) (high mannose) asparagine; by host glycan. Residues valine 1219–leucine 1239 traverse the membrane as a helical segment. The Cytoplasmic portion of the chain corresponds to threonine 1240–asparagine 1249. A helical transmembrane segment spans residues leucine 1250–isoleucine 1270. The Lumenal segment spans residues proline 1271 to alanine 1286. Residues methionine 1287 to methionine 1307 form a helical membrane-spanning segment. Residue arginine 1308 is a topological domain, cytoplasmic. The helical transmembrane segment at methionine 1309–asparagine 1329 threads the bilayer. The Lumenal portion of the chain corresponds to glutamate 1330–glycine 1340. A helical membrane pass occupies residues alanine 1341–alanine 1361. Topologically, residues glycine 1362–glycine 1373 are cytoplasmic. Residues tryptophan 1374 to alanine 1394 traverse the membrane as a helical segment. The Lumenal segment spans residues glutamate 1395–aspartate 1397. A helical membrane pass occupies residues isoleucine 1398–serine 1418. Residues glycine 1419–threonine 1475 are Cytoplasmic-facing. Positions leucine 1426–valine 1465 are interacts with and activates NS3 protease. The segment at residues cysteine 1476–leucine 1496 is an intramembrane region (helical). At threonine 1497–alanine 2172 the chain is on the cytoplasmic side. The 178-residue stretch at glycine 1504–alanine 1681 folds into the Peptidase S7 domain. Active-site charge relay system; for serine protease NS3 activity residues include histidine 1554, aspartate 1578, and serine 1638. The Helicase ATP-binding domain maps to proline 1684–serine 1840. Residues lysine 1688–glutamine 1691 form an important for RNA-binding region. Leucine 1697–threonine 1704 contributes to the ATP binding site. Residues aspartate 1788–histidine 1791 carry the DEAH box motif. One can recognise a Helicase C-terminal domain in the interval glycine 1851–glutamate 2016. N6-acetyllysine; by host is present on lysine 1892. The segment at alanine 1958 to glycine 1979 is disordered. A regulates the ATPase activity of NS3 helicase region spans residues glutamate 2167–aspartate 2171. Residues leucine 2173–methionine 2193 form a helical membrane-spanning segment. Residues methionine 2194–lysine 2197 are Lumenal-facing. Positions glycine 2198–methionine 2218 form an intramembrane region, helical. At serine 2219 to aspartate 2220 the chain is on the lumenal side. Residues valine 2221 to isoleucine 2241 traverse the membrane as a helical segment. The Cytoplasmic segment spans residues proline 2242 to alanine 2256. A helical transmembrane segment spans residues valine 2257 to alanine 2271. At asparagine 2272–aspartate 2309 the chain is on the lumenal side. Positions leucine 2310–isoleucine 2330 form an intramembrane region, helical. Over lysine 2331 to aspartate 2366 the chain is Lumenal. Residues leucine 2367–leucine 2394 form a helical membrane-spanning segment. Residues histidine 2395–arginine 2446 lie on the Cytoplasmic side of the membrane. Residues leucine 2447–threonine 2467 form a helical membrane-spanning segment. The Lumenal portion of the chain corresponds to threonine 2468–threonine 2498. The chain crosses the membrane as a helical span at residues glycine 2499–isoleucine 2519. Residues lysine 2520–leucine 3434 lie on the Cytoplasmic side of the membrane. Positions glycine 2530 to alanine 2795 constitute an mRNA cap 0-1 NS5-type MT domain. S-adenosyl-L-methionine is bound at residue serine 2585. Position 2585 is a phosphoserine (serine 2585). Lysine 2590 (for 2'-O-MTase activity) is an active-site residue. Positions 2615, 2616, 2633, 2634, 2660, and 2661 each coordinate S-adenosyl-L-methionine. Aspartate 2675 (for 2'-O-MTase activity) is an active-site residue. Isoleucine 2676 is an S-adenosyl-L-methionine binding site. Active-site for 2'-O-MTase activity residues include lysine 2711 and glutamate 2747. Tyrosine 2749 provides a ligand contact to S-adenosyl-L-methionine. 4 residues coordinate Zn(2+): glutamate 2969, histidine 2973, cysteine 2978, and cysteine 2981. Positions glycine 3059–alanine 3211 constitute a RdRp catalytic domain. Residues histidine 3246, cysteine 3262, and cysteine 3381 each coordinate Zn(2+).

In the N-terminal section; belongs to the class I-like SAM-binding methyltransferase superfamily. mRNA cap 0-1 NS5-type methyltransferase family. As to quaternary structure, homodimer. Interacts (via N-terminus) with host EXOC1 (via C-terminus); this interaction results in EXOC1 degradation through the proteasome degradation pathway. Forms heterodimers with envelope protein E in the endoplasmic reticulum and Golgi. In terms of assembly, homodimer; in the endoplasmic reticulum and Golgi. Interacts with protein prM. Interacts with non-structural protein 1. As to quaternary structure, homodimer; Homohexamer when secreted. Interacts with envelope protein E. NS1 interacts with NS4B. Interacts with host complement protein CFH; this interaction leads to the degradation of C3. Interacts (via N-terminus) with serine protease NS3. In terms of assembly, forms a heterodimer with serine protease NS3. May form homooligomers. As to quaternary structure, forms a heterodimer with NS2B. Interacts with non-structural protein 2A (via N-terminus). Interacts with NS4B. Interacts with unphosphorylated RNA-directed RNA polymerase NS5; this interaction stimulates RNA-directed RNA polymerase NS5 guanylyltransferase activity. Interacts with serine protease NS3. In terms of assembly, homodimer. Interacts with host STAT2; this interaction inhibits the phosphorylation of the latter, and, when all viral proteins are present (polyprotein), targets STAT2 for degradation. Interacts with serine protease NS3. In terms of processing, specific enzymatic cleavages in vivo yield mature proteins. Cleavages in the lumen of endoplasmic reticulum are performed by host signal peptidase, whereas cleavages in the cytoplasmic side are performed by serine protease NS3. Signal cleavage at the 2K-4B site requires a prior NS3 protease-mediated cleavage at the 4A-2K site. Cleaved in post-Golgi vesicles by a host furin, releasing the mature small envelope protein M, and peptide pr. This cleavage is incomplete as up to 30% of viral particles still carry uncleaved prM. Post-translationally, N-glycosylated. In terms of processing, N-glycosylated. The excreted form is glycosylated and this is required for efficient secretion of the protein from infected cells. Acetylated by host KAT5. Acetylation modulates NS3 RNA-binding and unwinding activities and plays an important positive role for viral replication. Post-translationally, phosphorylated on serines residues. This phosphorylation may trigger NS5 nuclear localization.

Its subcellular location is the virion. It localises to the host nucleus. The protein resides in the host cytoplasm. It is found in the host perinuclear region. The protein localises to the secreted. Its subcellular location is the virion membrane. It localises to the host endoplasmic reticulum membrane. It carries out the reaction Selective hydrolysis of -Xaa-Xaa-|-Yaa- bonds in which each of the Xaa can be either Arg or Lys and Yaa can be either Ser or Ala.. The catalysed reaction is RNA(n) + a ribonucleoside 5'-triphosphate = RNA(n+1) + diphosphate. It catalyses the reaction a ribonucleoside 5'-triphosphate + H2O = a ribonucleoside 5'-diphosphate + phosphate + H(+). The enzyme catalyses ATP + H2O = ADP + phosphate + H(+). It carries out the reaction a 5'-end (5'-triphosphoguanosine)-ribonucleoside in mRNA + S-adenosyl-L-methionine = a 5'-end (N(7)-methyl 5'-triphosphoguanosine)-ribonucleoside in mRNA + S-adenosyl-L-homocysteine. The catalysed reaction is a 5'-end (N(7)-methyl 5'-triphosphoguanosine)-ribonucleoside in mRNA + S-adenosyl-L-methionine = a 5'-end (N(7)-methyl 5'-triphosphoguanosine)-(2'-O-methyl-ribonucleoside) in mRNA + S-adenosyl-L-homocysteine + H(+). Plays a role in virus budding by binding to the cell membrane and gathering the viral RNA into a nucleocapsid that forms the core of a mature virus particle. During virus entry, may induce genome penetration into the host cytoplasm after hemifusion induced by the surface proteins. Can migrate to the cell nucleus where it modulates host functions. Overcomes the anti-viral effects of host EXOC1 by sequestering and degrading the latter through the proteasome degradation pathway. In terms of biological role, inhibits RNA silencing by interfering with host Dicer. Functionally, prevents premature fusion activity of envelope proteins in trans-Golgi by binding to envelope protein E at pH6.0. After virion release in extracellular space, gets dissociated from E dimers. Its function is as follows. Acts as a chaperone for envelope protein E during intracellular virion assembly by masking and inactivating envelope protein E fusion peptide. prM is the only viral peptide matured by host furin in the trans-Golgi network probably to avoid catastrophic activation of the viral fusion activity in acidic Golgi compartment prior to virion release. prM-E cleavage is inefficient, and many virions are only partially matured. These uncleaved prM would play a role in immune evasion. May play a role in virus budding. Exerts cytotoxic effects by activating a mitochondrial apoptotic pathway through M ectodomain. May display a viroporin activity. In terms of biological role, binds to host cell surface receptor and mediates fusion between viral and cellular membranes. Envelope protein is synthesized in the endoplasmic reticulum in the form of heterodimer with protein prM. They play a role in virion budding in the ER, and the newly formed immature particle is covered with 60 spikes composed of heterodimer between precursor prM and envelope protein E. The virion is transported to the Golgi apparatus where the low pH causes dissociation of PrM-E heterodimers and formation of E homodimers. prM-E cleavage is inefficient, and many virions are only partially matured. These uncleaved prM would play a role in immune evasion. Functionally, involved in immune evasion, pathogenesis and viral replication. Once cleaved off the polyprotein, is targeted to three destinations: the viral replication cycle, the plasma membrane and the extracellular compartment. Essential for viral replication. Required for formation of the replication complex and recruitment of other non-structural proteins to the ER-derived membrane structures. Excreted as a hexameric lipoparticle that plays a role against host immune response. Antagonizing the complement function. Binds to the host macrophages and dendritic cells. Inhibits signal transduction originating from Toll-like receptor 3 (TLR3). Its function is as follows. Component of the viral RNA replication complex that functions in virion assembly and antagonizes the host alpha/beta interferon antiviral response. Required cofactor for the serine protease function of NS3. May have membrane-destabilizing activity and form viroporins. In terms of biological role, displays three enzymatic activities: serine protease, NTPase and RNA helicase. NS3 serine protease, in association with NS2B, performs its autocleavage and cleaves the polyprotein at dibasic sites in the cytoplasm: C-prM, NS2A-NS2B, NS2B-NS3, NS3-NS4A, NS4A-2K and NS4B-NS5. NS3 RNA helicase binds RNA and unwinds dsRNA in the 3' to 5' direction. Functionally, regulates the ATPase activity of the NS3 helicase activity. NS4A allows NS3 helicase to conserve energy during unwinding. Its function is as follows. Functions as a signal peptide for NS4B and is required for the interferon antagonism activity of the latter. Induces the formation of ER-derived membrane vesicles where the viral replication takes place. Inhibits interferon (IFN)-induced host STAT1 phosphorylation and nuclear translocation, thereby preventing the establishment of cellular antiviral state by blocking the IFN-alpha/beta pathway. Inhibits STAT2 translocation in the nucleus after IFN-alpha treatment. In terms of biological role, replicates the viral (+) and (-) RNA genome, and performs the capping of genomes in the cytoplasm. NS5 methylates viral RNA cap at guanine N-7 and ribose 2'-O positions. Besides its role in RNA genome replication, also prevents the establishment of cellular antiviral state by blocking the interferon-alpha/beta (IFN-alpha/beta) signaling pathway. Inhibits host TYK2 and STAT2 phosphorylation, thereby preventing activation of JAK-STAT signaling pathway. In Culex annulirostris (Common banded mosquito), this protein is Genome polyprotein.